The following is a 148-amino-acid chain: Deoxyuridine 5'-triphosphate nucleotidohydrolase (148 aa).

Substrate contacts are provided by residues 67–69, asparagine 80, 84–86, and methionine 94; these read RSG and LID.

The protein belongs to the dUTPase family. The cofactor is Mg(2+).

It carries out the reaction dUTP + H2O = dUMP + diphosphate + H(+). The protein operates within pyrimidine metabolism; dUMP biosynthesis; dUMP from dCTP (dUTP route): step 2/2. Its function is as follows. This enzyme is involved in nucleotide metabolism: it produces dUMP, the immediate precursor of thymidine nucleotides and it decreases the intracellular concentration of dUTP so that uracil cannot be incorporated into DNA. The polypeptide is Deoxyuridine 5'-triphosphate nucleotidohydrolase (Burkholderia cenocepacia (strain ATCC BAA-245 / DSM 16553 / LMG 16656 / NCTC 13227 / J2315 / CF5610) (Burkholderia cepacia (strain J2315))).